A 486-amino-acid polypeptide reads, in one-letter code: N-succinylglutamate 5-semialdehyde dehydrogenase (486 aa).

An NAD(+)-binding site is contributed by 220–225; it reads GSSRTG. Residues Glu243 and Cys277 contribute to the active site.

Belongs to the aldehyde dehydrogenase family. AstD subfamily.

It carries out the reaction N-succinyl-L-glutamate 5-semialdehyde + NAD(+) + H2O = N-succinyl-L-glutamate + NADH + 2 H(+). Its pathway is amino-acid degradation; L-arginine degradation via AST pathway; L-glutamate and succinate from L-arginine: step 4/5. In terms of biological role, catalyzes the NAD-dependent reduction of succinylglutamate semialdehyde into succinylglutamate. The protein is N-succinylglutamate 5-semialdehyde dehydrogenase of Shewanella woodyi (strain ATCC 51908 / MS32).